The chain runs to 242 residues: UPF0173 metal-dependent hydrolase Rxyl_1261 (242 aa).

The protein belongs to the UPF0173 family.

The protein is UPF0173 metal-dependent hydrolase Rxyl_1261 of Rubrobacter xylanophilus (strain DSM 9941 / JCM 11954 / NBRC 16129 / PRD-1).